Here is a 696-residue protein sequence, read N- to C-terminus: Spermatogenesis-associated protein 21 (696 aa).

Disordered regions lie at residues 1 to 301 and 329 to 386; these read MDNR…AAGT and LKAR…SVPT. Residues 67-86 show a composition bias toward basic and acidic residues; it reads KGPRYRDTFKEGPSELRTQE. Positions 96-116 are enriched in polar residues; it reads KQSSWVPQEGSQELQAGQDQS. Over residues 195 to 209 the composition is skewed to basic and acidic residues; that stretch reads GDKRPKEADVPHIRP. Over residues 223–235 the composition is skewed to polar residues; the sequence is DSSQEAMPPTSTV. Over residues 275–287 the composition is skewed to basic and acidic residues; that stretch reads EVRDIGERREPDR. Low complexity-rich tracts occupy residues 288–297 and 339–366; these read VQQQPQKPVV and SPRTLTPVPTSSPSLPQTPASAPASGPS. A coiled-coil region spans residues 424–451; the sequence is EPEEQSLQKLYQNREKSEEQLTLKQEEA. The EF-hand domain maps to 481-516; the sequence is VTPAQVEDALMSADVNGDGHVDFKDFLAVMTDTRRF. Residues aspartate 494, asparagine 496, aspartate 498, histidine 500, and aspartate 505 each coordinate Ca(2+). The segment at 646-696 is disordered; the sequence is KPTNHYVQDQCTTPGLAPDIRSPFFQSRSQGNREHNSDSRKWPSSVPSRTH. Basic and acidic residues predominate over residues 676-686; the sequence is GNREHNSDSRK.

Involved in the differentiation of haploid spermatids. This is Spermatogenesis-associated protein 21 (SPATA21) from Macaca fascicularis (Crab-eating macaque).